The primary structure comprises 65 residues: Large ribosomal subunit protein bL28 (65 aa).

Positions 1–26 (MARRDALTGKSALSGQSRSHALNATK) are disordered. The segment covering 11 to 22 (SALSGQSRSHAL) has biased composition (polar residues).

Belongs to the bacterial ribosomal protein bL28 family.

This Mycoplasma mycoides subsp. mycoides SC (strain CCUG 32753 / NCTC 10114 / PG1) protein is Large ribosomal subunit protein bL28.